The primary structure comprises 823 residues: ATM interactor (823 aa).

The segment at 28-67 (GAAAAASGPWVPPGPRLRGSRPRPAGATQQPAVPAPPAGE) is disordered. Over residues 49–59 (PRPAGATQQPA) the composition is skewed to low complexity. Residues 84-109 (ILCTVRGCGKILPNSPALNMHLVKSH) form a C2H2-type 1 zinc finger. A C2H2-type 2; degenerate zinc finger spans residues 165-184 (HKCSKCSNSYGTEWDLKRHA). Residues 214-225 (HEIPAEHRDPPS) show a composition bias toward basic and acidic residues. 3 disordered regions span residues 214 to 234 (HEIP…ENCA), 268 to 289 (EPSF…TPPR), and 610 to 634 (RSLL…NPGI). The tract at residues 223–442 (PPSKKRKMEN…ADSSVSSCSQ (220 aa)) is required for formation of RAD51 foci. 2 stretches are compositionally biased toward polar residues: residues 275 to 286 (CGSNTDKQTLTT) and 613 to 629 (LSDT…SGPA).

In terms of assembly, interacts via its C-terminus with ATM. Interacts with DYNLL1; this interaction inhibits ATMIN transcriptional activity and hence may play a role in a feedback loop whereby DYNLL1 inhibits transactivation of its own promoter by ATMIN. Ubiquitously expressed in normal tissues and cancer cell lines with highest levels in placenta and skeletal muscle.

Its subcellular location is the nucleus. Its function is as follows. Transcription factor. Plays a crucial role in cell survival and RAD51 foci formation in response to methylating DNA damage. Involved in regulating the activity of ATM in the absence of DNA damage. May play a role in stabilizing ATM. Binds to the DYNLL1 promoter and activates its transcription. The sequence is that of ATM interactor (ATMIN) from Homo sapiens (Human).